A 353-amino-acid polypeptide reads, in one-letter code: Vomeronasal type-1 receptor 1 (353 aa).

The Extracellular segment spans residues 1 to 56 (MVGDTLKLLSPLMTRYFFLLFYSTDSSDLNENQHPLDFDEMAFGKVKSGISFLIQT). The chain crosses the membrane as a helical span at residues 57–77 (GVGILGNSFLLCFYNLILFTG). The Cytoplasmic portion of the chain corresponds to 78-84 (HKLRPTD). Residues 85 to 105 (LILSQLALANSMVLFFKGIPQ) form a helical membrane-spanning segment. Topologically, residues 106–132 (TMAAFGLKYLLNDTGCKFVFYYHRVGT) are extracellular. The N-linked (GlcNAc...) asparagine glycan is linked to asparagine 117. The helical transmembrane segment at 133 to 153 (RVSLSTICLLNGFQAIKLNPS) threads the bilayer. Topologically, residues 154–169 (ICRWMEIKIRSPRFID) are cytoplasmic. Residues 170–190 (FCCLLCWAPHVLMNASVLLLV) traverse the membrane as a helical segment. Residues 191-226 (NGPLNSKNSSAKNNYGYCSYKASKRFSSLHAVLYFS) are Extracellular-facing. Residue asparagine 198 is glycosylated (N-linked (GlcNAc...) asparagine). A helical membrane pass occupies residues 227–247 (PDFMSLGFMVWASGSMVFFLY). At 248–274 (RHKQQVQHNHSNRLSCRPSQEARATHT) the chain is on the cytoplasmic side. A helical membrane pass occupies residues 275–295 (IMVLVSSFFVFYSVHSFLTIW). The Extracellular segment spans residues 296–303 (TTVVANPG). Residues 304-324 (QWIVTNSVLVASCFPARSPFV) traverse the membrane as a helical segment. Residues 325-353 (LIMSDTHISQFCFACRTRKTLFPNLVVMP) are Cytoplasmic-facing.

Belongs to the G-protein coupled receptor 1 family. In terms of tissue distribution, expressed in the olfactory mucosa, very low expression in brain, lung and kidney.

The protein resides in the cell membrane. Putative pheromone receptor. This is Vomeronasal type-1 receptor 1 (VN1R1) from Homo sapiens (Human).